A 362-amino-acid polypeptide reads, in one-letter code: Talin rod domain-containing protein 1 (362 aa).

The interval 1 to 27 (MASGSAGKPTGEAASPAPGSAVGGASS) is disordered. Position 2 is an N-acetylalanine (alanine 2). Positions 9–27 (PTGEAASPAPGSAVGGASS) are enriched in low complexity.

May homodimerize. Interacts with F-actin. Ubiquitous.

Functionally, actin-binding protein which may have an oncogenic function and regulates cell proliferation, migration and invasion in cancer cells. The polypeptide is Talin rod domain-containing protein 1 (Mus musculus (Mouse)).